The sequence spans 267 residues: MSLESLFQHIIFSEHQAEESRRVMREVRSEITRCRGKIKKATEDLSEEKIKLESKVQQLSEKSFLLELLKTHENALERQLSEIISERDTLLQACEAIKNKTTEEEERFIKEITDFNDNYEITKKRDTLMKENIEMEMADLDSQADVLRREMKSVERNRGQLWELQKLKNELLQELFTLQKKLKVLKDEETEAICITKQLEAEKTKVRDKPQHDPECVRLKRELDLYKAEDMESVYRALQAEVDLLELALAPKDPQDSNSLSHEPPHT.

Coiled coils occupy residues 24 to 97 and 128 to 191; these read MREV…CEAI and LMKE…EETE.

The protein belongs to the CCDC172 family. May interact with TEKT2.

The protein localises to the cytoplasm. It localises to the cell projection. Its subcellular location is the cilium. The protein is Coiled-coil domain-containing protein 172 (Ccdc172) of Mus musculus (Mouse).